Here is a 270-residue protein sequence, read N- to C-terminus: ATP synthase subunit a (270 aa).

5 helical membrane-spanning segments follow: residues 38–58 (VHID…GIFY), 98–118 (IAPL…MDLV), 143–163 (DVNI…YYSI), 208–228 (LFGN…MLPW), and 239–259 (AIFH…LTIV).

The protein belongs to the ATPase A chain family. F-type ATPases have 2 components, CF(1) - the catalytic core - and CF(0) - the membrane proton channel. CF(1) has five subunits: alpha(3), beta(3), gamma(1), delta(1), epsilon(1). CF(0) has three main subunits: a(1), b(2) and c(9-12). The alpha and beta chains form an alternating ring which encloses part of the gamma chain. CF(1) is attached to CF(0) by a central stalk formed by the gamma and epsilon chains, while a peripheral stalk is formed by the delta and b chains.

The protein localises to the cell inner membrane. In terms of biological role, key component of the proton channel; it plays a direct role in the translocation of protons across the membrane. The sequence is that of ATP synthase subunit a from Vibrio alginolyticus.